We begin with the raw amino-acid sequence, 269 residues long: Histone doublet H2B-H2A (269 aa).

Residues 1–168 (MATQKETTRK…LAGNAARDSK (168 aa)) are histone fold. Residues 210–249 (RKKARKTTEKEASSPKKKAAPKKKKAASKQKKSLSDKELA) form a disordered region. Residues 224 to 241 (PKKKAAPKKKKAASKQKK) are compositionally biased toward basic residues.

It localises to the host nucleus. Its subcellular location is the host cytoplasm. It is found in the virion. Functionally, histone-like protein that is recruited to viral factories during viral replication and participates in viral DNA packaging and virion production probably by forming unstable nucleosome-like particles. May compact the viral DNA. This is Histone doublet H2B-H2A from Melbournevirus (MelV).